The primary structure comprises 452 residues: Pup--protein ligase (452 aa).

Mg(2+) is bound at residue E9. R53 is a binding site for ATP. Residue Y55 participates in Mg(2+) binding. Residue D57 is the Proton acceptor of the active site. E63 contributes to the Mg(2+) binding site. Residues T66 and W419 each contribute to the ATP site.

Belongs to the Pup ligase/Pup deamidase family. Pup-conjugating enzyme subfamily.

The enzyme catalyses ATP + [prokaryotic ubiquitin-like protein]-L-glutamate + [protein]-L-lysine = ADP + phosphate + N(6)-([prokaryotic ubiquitin-like protein]-gamma-L-glutamyl)-[protein]-L-lysine.. The protein operates within protein degradation; proteasomal Pup-dependent pathway. It functions in the pathway protein modification; protein pupylation. In terms of biological role, catalyzes the covalent attachment of the prokaryotic ubiquitin-like protein modifier Pup to the proteasomal substrate proteins, thereby targeting them for proteasomal degradation. This tagging system is termed pupylation. The ligation reaction involves the side-chain carboxylate of the C-terminal glutamate of Pup and the side-chain amino group of a substrate lysine. The sequence is that of Pup--protein ligase from Mycobacterium avium (strain 104).